The chain runs to 715 residues: Fatty acid oxidation complex subunit alpha (715 aa).

Positions 1–190 (MIYEGKAITV…KVGAVDAVVA (190 aa)) are enoyl-CoA hydratase/isomerase. D297 is a substrate binding site. The interval 312–715 (KDVKQAAVLG…MAKNGQSFFG (404 aa)) is 3-hydroxyacyl-CoA dehydrogenase. Residues M325, D344, 401–403 (VVE), K408, and S430 each bind NAD(+). Catalysis depends on H451, which acts as the For 3-hydroxyacyl-CoA dehydrogenase activity. NAD(+) is bound at residue N454. Substrate is bound by residues N501 and Y660.

In the N-terminal section; belongs to the enoyl-CoA hydratase/isomerase family. It in the C-terminal section; belongs to the 3-hydroxyacyl-CoA dehydrogenase family. In terms of assembly, heterotetramer of two alpha chains (FadB) and two beta chains (FadA).

It catalyses the reaction a (3S)-3-hydroxyacyl-CoA + NAD(+) = a 3-oxoacyl-CoA + NADH + H(+). It carries out the reaction a (3S)-3-hydroxyacyl-CoA = a (2E)-enoyl-CoA + H2O. The enzyme catalyses a 4-saturated-(3S)-3-hydroxyacyl-CoA = a (3E)-enoyl-CoA + H2O. The catalysed reaction is (3S)-3-hydroxybutanoyl-CoA = (3R)-3-hydroxybutanoyl-CoA. It catalyses the reaction a (3Z)-enoyl-CoA = a 4-saturated (2E)-enoyl-CoA. It carries out the reaction a (3E)-enoyl-CoA = a 4-saturated (2E)-enoyl-CoA. The protein operates within lipid metabolism; fatty acid beta-oxidation. Involved in the aerobic and anaerobic degradation of long-chain fatty acids via beta-oxidation cycle. Catalyzes the formation of 3-oxoacyl-CoA from enoyl-CoA via L-3-hydroxyacyl-CoA. It can also use D-3-hydroxyacyl-CoA and cis-3-enoyl-CoA as substrate. In Pseudomonas fluorescens (strain Pf0-1), this protein is Fatty acid oxidation complex subunit alpha.